Consider the following 215-residue polypeptide: Thiamine-phosphate synthase (215 aa).

Residues Q43–K47 and N75 contribute to the 4-amino-2-methyl-5-(diphosphooxymethyl)pyrimidine site. The Mg(2+) site is built by D76 and D95. S114 is a 4-amino-2-methyl-5-(diphosphooxymethyl)pyrimidine binding site. T141–T143 is a binding site for 2-[(2R,5Z)-2-carboxy-4-methylthiazol-5(2H)-ylidene]ethyl phosphate. Residue K144 coordinates 4-amino-2-methyl-5-(diphosphooxymethyl)pyrimidine. G172 contributes to the 2-[(2R,5Z)-2-carboxy-4-methylthiazol-5(2H)-ylidene]ethyl phosphate binding site.

It belongs to the thiamine-phosphate synthase family. Mg(2+) serves as cofactor.

It carries out the reaction 2-[(2R,5Z)-2-carboxy-4-methylthiazol-5(2H)-ylidene]ethyl phosphate + 4-amino-2-methyl-5-(diphosphooxymethyl)pyrimidine + 2 H(+) = thiamine phosphate + CO2 + diphosphate. It catalyses the reaction 2-(2-carboxy-4-methylthiazol-5-yl)ethyl phosphate + 4-amino-2-methyl-5-(diphosphooxymethyl)pyrimidine + 2 H(+) = thiamine phosphate + CO2 + diphosphate. The catalysed reaction is 4-methyl-5-(2-phosphooxyethyl)-thiazole + 4-amino-2-methyl-5-(diphosphooxymethyl)pyrimidine + H(+) = thiamine phosphate + diphosphate. It functions in the pathway cofactor biosynthesis; thiamine diphosphate biosynthesis; thiamine phosphate from 4-amino-2-methyl-5-diphosphomethylpyrimidine and 4-methyl-5-(2-phosphoethyl)-thiazole: step 1/1. Its function is as follows. Condenses 4-methyl-5-(beta-hydroxyethyl)thiazole monophosphate (THZ-P) and 2-methyl-4-amino-5-hydroxymethyl pyrimidine pyrophosphate (HMP-PP) to form thiamine monophosphate (TMP). The polypeptide is Thiamine-phosphate synthase (Streptomyces avermitilis (strain ATCC 31267 / DSM 46492 / JCM 5070 / NBRC 14893 / NCIMB 12804 / NRRL 8165 / MA-4680)).